The sequence spans 247 residues: Terpene cyclase ausL (247 aa).

Transmembrane regions (helical) follow at residues 49-69 (AIAVLPLCCDIAWEFTYAWIY), 75-95 (HWQGVVRVWFFLHTAVLAATL), 114-134 (LVLLYVAVIGAFAAGQLCLAL), 138-158 (GALGFHWGGALCQFLSSSGAV), 171-191 (SLVIWGARAISTAGGFVKLCI), and 206-226 (PMCWFYIGIVLSLDASYPVLY).

This sequence belongs to the paxB family.

The protein resides in the membrane. Its pathway is secondary metabolite biosynthesis; terpenoid biosynthesis. In terms of biological role, terpene cyclase; part of the gene cluster that mediates the biosynthesis of calidodehydroaustin, a fungal meroterpenoid. The first step of the pathway is the synthesis of 3,5-dimethylorsellinic acid by the polyketide synthase ausA. 3,5-dimethylorsellinic acid is then prenylated by the polyprenyl transferase ausN. Further epoxidation by the FAD-dependent monooxygenase ausM and cyclization by the probable terpene cyclase ausL lead to the formation of protoaustinoid A. Protoaustinoid A is then oxidized to spiro-lactone preaustinoid A3 by the combined action of the FAD-binding monooxygenases ausB and ausC, and the dioxygenase ausE. Acid-catalyzed keto-rearrangement and ring contraction of the tetraketide portion of preaustinoid A3 by ausJ lead to the formation of preaustinoid A4. The aldo-keto reductase ausK, with the help of ausH, is involved in the next step by transforming preaustinoid A4 into isoaustinone which is in turn hydroxylated by the P450 monooxygenase ausI to form austinolide. The cytochrome P450 monooxygenase ausG modifies austinolide to austinol. Austinol is further acetylated to austin by the O-acetyltransferase ausP, which spontaneously changes to dehydroaustin. The cytochrome P450 monooxygenase ausR then converts dehydroaustin is into 7-dehydrodehydroaustin. The hydroxylation catalyzed by ausR permits the O-acetyltransferase ausQ to add an additional acetyl group to the molecule, leading to the formation of acetoxydehydroaustin. The short chain dehydrogenase ausT catalyzes the reduction of the double bond present between carbon atoms 1 and 2 to convert 7-dehydrodehydroaustin into 1,2-dihydro-7-hydroxydehydroaustin. AusQ catalyzes not only an acetylation reaction but also the addition of the PKS ausV diketide product to 1,2-dihydro-7-hydroxydehydroaustin, forming precalidodehydroaustin. Finally, the iron/alpha-ketoglutarate-dependent dioxygenase converts precalidodehydroaustin into calidodehydroaustin. This chain is Terpene cyclase ausL, found in Aspergillus calidoustus.